Consider the following 537-residue polypeptide: Glutamate--tRNA ligase (537 aa).

The short motif at 9–19 is the 'HIGH' region element; that stretch reads PSPTGLQHIGG. 4 residues coordinate Zn(2+): cysteine 125, cysteine 127, cysteine 152, and glutamate 154. A 'KMSKS' region motif is present at residues 270-274; it reads KLSKR. Lysine 273 is a binding site for ATP.

The protein belongs to the class-I aminoacyl-tRNA synthetase family. Glutamate--tRNA ligase type 1 subfamily. As to quaternary structure, monomer. Zn(2+) is required as a cofactor.

The protein resides in the cytoplasm. The enzyme catalyses tRNA(Glu) + L-glutamate + ATP = L-glutamyl-tRNA(Glu) + AMP + diphosphate. Its function is as follows. Catalyzes the attachment of glutamate to tRNA(Glu) in a two-step reaction: glutamate is first activated by ATP to form Glu-AMP and then transferred to the acceptor end of tRNA(Glu). The protein is Glutamate--tRNA ligase of Treponema pallidum (strain Nichols).